A 275-amino-acid polypeptide reads, in one-letter code: Large ribosomal subunit protein uL2 (275 aa).

Residues valine 223–serine 260 are disordered.

The protein belongs to the universal ribosomal protein uL2 family. As to quaternary structure, part of the 50S ribosomal subunit. Forms a bridge to the 30S subunit in the 70S ribosome.

One of the primary rRNA binding proteins. Required for association of the 30S and 50S subunits to form the 70S ribosome, for tRNA binding and peptide bond formation. It has been suggested to have peptidyltransferase activity; this is somewhat controversial. Makes several contacts with the 16S rRNA in the 70S ribosome. The sequence is that of Large ribosomal subunit protein uL2 from Legionella pneumophila (strain Paris).